The primary structure comprises 335 residues: L-lactate dehydrogenase B chain (335 aa).

Residues 29–57 (GQVGMACAISILEKGLCDELALVDVVEDK) and Arg-99 each bind NAD(+). Substrate contacts are provided by Arg-106, Asn-138, and Arg-169. Asn-138 is an NAD(+) binding site. His-193 acts as the Proton acceptor in catalysis. Substrate is bound at residue Thr-248.

Belongs to the LDH/MDH superfamily. LDH family. In terms of assembly, homotetramer.

The protein localises to the cytoplasm. The enzyme catalyses (S)-lactate + NAD(+) = pyruvate + NADH + H(+). The protein operates within fermentation; pyruvate fermentation to lactate; (S)-lactate from pyruvate: step 1/1. In terms of biological role, interconverts simultaneously and stereospecifically pyruvate and lactate with concomitant interconversion of NADH and NAD(+). This chain is L-lactate dehydrogenase B chain (LDHB), found in Sceloporus undulatus (Eastern fence lizard).